A 359-amino-acid chain; its full sequence is Dihydroorotate dehydrogenase (quinone) (359 aa).

FMN is bound by residues 68 to 72 and threonine 92; that span reads AGFDK. Lysine 72 serves as a coordination point for substrate. Position 117–121 (117–121) interacts with substrate; sequence NRMGF. FMN is bound by residues asparagine 145 and asparagine 176. Asparagine 176 provides a ligand contact to substrate. Serine 179 serves as the catalytic Nucleophile. Residue asparagine 181 coordinates substrate. Lysine 212 and threonine 240 together coordinate FMN. 241–242 serves as a coordination point for substrate; sequence NT. Residues glycine 266, glycine 295, and 316–317 contribute to the FMN site; that span reads YT.

This sequence belongs to the dihydroorotate dehydrogenase family. Type 2 subfamily. Monomer. FMN is required as a cofactor.

The protein localises to the cell membrane. It carries out the reaction (S)-dihydroorotate + a quinone = orotate + a quinol. It participates in pyrimidine metabolism; UMP biosynthesis via de novo pathway; orotate from (S)-dihydroorotate (quinone route): step 1/1. Catalyzes the conversion of dihydroorotate to orotate with quinone as electron acceptor. This chain is Dihydroorotate dehydrogenase (quinone), found in Corynebacterium striatum.